A 360-amino-acid chain; its full sequence is Magnesium-protoporphyrin IX monomethyl ester [oxidative] cyclase (360 aa).

Residues 1–21 form a disordered region; the sequence is MPPTAVTEATAVPGSNVTTKD.

Belongs to the AcsF family. Fe cation is required as a cofactor.

The catalysed reaction is Mg-protoporphyrin IX 13-monomethyl ester + 3 NADPH + 3 O2 + 2 H(+) = 3,8-divinyl protochlorophyllide a + 3 NADP(+) + 5 H2O. It participates in porphyrin-containing compound metabolism; chlorophyll biosynthesis (light-independent). In terms of biological role, catalyzes the formation of the isocyclic ring in chlorophyll biosynthesis. Mediates the cyclase reaction, which results in the formation of divinylprotochlorophyllide (Pchlide) characteristic of all chlorophylls from magnesium-protoporphyrin IX 13-monomethyl ester (MgPMME). This Synechococcus sp. (strain CC9311) protein is Magnesium-protoporphyrin IX monomethyl ester [oxidative] cyclase.